The primary structure comprises 317 residues: Nicotianamine synthase (317 aa).

This sequence belongs to the nicotianamine synthase (NAS)-like family. In terms of assembly, homomultimer. In terms of tissue distribution, leaves and roots.

It catalyses the reaction 3 S-adenosyl-L-methionine = nicotianamine + 3 S-methyl-5'-thioadenosine + 3 H(+). Its function is as follows. Synthesizes nicotianamine, a polyamine that serves as a sensor for the physiological iron status within the plant, and/or might be involved in the transport of iron. This Solanum lycopersicum (Tomato) protein is Nicotianamine synthase (CHLN).